A 430-amino-acid polypeptide reads, in one-letter code: Isochorismate synthase MenF (430 aa).

Lysine 187 (proton acceptor) is an active-site residue. Glutamate 237 functions as the Proton donor in the catalytic mechanism. Mg(2+)-binding residues include glutamate 281 and glutamate 414.

The protein belongs to the isochorismate synthase family. Mg(2+) serves as cofactor.

It catalyses the reaction chorismate = isochorismate. It participates in quinol/quinone metabolism; 1,4-dihydroxy-2-naphthoate biosynthesis; 1,4-dihydroxy-2-naphthoate from chorismate: step 1/7. The protein operates within quinol/quinone metabolism; menaquinone biosynthesis. Functionally, catalyzes the conversion of chorismate to isochorismate. The chain is Isochorismate synthase MenF from Haemophilus influenzae (strain ATCC 51907 / DSM 11121 / KW20 / Rd).